A 149-amino-acid polypeptide reads, in one-letter code: D-aminoacyl-tRNA deacylase (149 aa).

Positions 137–138 match the Gly-cisPro motif, important for rejection of L-amino acids motif; the sequence is GP.

Belongs to the DTD family. As to quaternary structure, homodimer.

The protein resides in the cytoplasm. The catalysed reaction is glycyl-tRNA(Ala) + H2O = tRNA(Ala) + glycine + H(+). It carries out the reaction a D-aminoacyl-tRNA + H2O = a tRNA + a D-alpha-amino acid + H(+). In terms of biological role, an aminoacyl-tRNA editing enzyme that deacylates mischarged D-aminoacyl-tRNAs. Also deacylates mischarged glycyl-tRNA(Ala), protecting cells against glycine mischarging by AlaRS. Acts via tRNA-based rather than protein-based catalysis; rejects L-amino acids rather than detecting D-amino acids in the active site. By recycling D-aminoacyl-tRNA to D-amino acids and free tRNA molecules, this enzyme counteracts the toxicity associated with the formation of D-aminoacyl-tRNA entities in vivo and helps enforce protein L-homochirality. The sequence is that of D-aminoacyl-tRNA deacylase from Herminiimonas arsenicoxydans.